The following is a 378-amino-acid chain: Glutamate 5-kinase (378 aa).

Lys21 serves as a coordination point for ATP. Residues Ser61, Asp148, and Asn160 each contribute to the substrate site. 180 to 181 is an ATP binding site; that stretch reads TD. In terms of domain architecture, PUA spans 286-364; that stretch reads RGTLVLDAGA…RRIEELLGYM (79 aa).

It belongs to the glutamate 5-kinase family.

The protein localises to the cytoplasm. It carries out the reaction L-glutamate + ATP = L-glutamyl 5-phosphate + ADP. It functions in the pathway amino-acid biosynthesis; L-proline biosynthesis; L-glutamate 5-semialdehyde from L-glutamate: step 1/2. In terms of biological role, catalyzes the transfer of a phosphate group to glutamate to form L-glutamate 5-phosphate. The sequence is that of Glutamate 5-kinase from Chromohalobacter salexigens (strain ATCC BAA-138 / DSM 3043 / CIP 106854 / NCIMB 13768 / 1H11).